Here is a 191-residue protein sequence, read N- to C-terminus: Bcl-2-like protein 10 (191 aa).

A BH1 motif is present at residues 79–98 (LSKDQDFSWSQLVMLLAFAG). A Glycyl lysine isopeptide (Lys-Gly) (interchain with G-Cter in ubiquitin) cross-link involves residue Lys112. The BH2 motif lies at 144–155 (RLEALGGWDGFC). A helical transmembrane segment spans residues 166–183 (FWRRLLIQAFLSGFFATA).

The protein belongs to the Bcl-2 family. Interacts with BAX. Interacts with BCL2 and BCL2L1/BCLX. Interacts with APAF1. Interacts with ITPR1, ITPR2 and ITPR3; the interaction with ITPR1 is increased in the presence of AHCLY1. Interacts with AHCYL1. Interacts with HIP1R (via ENTH and I/LWEQ domains). Interacts with CASP9. Interacts with BCL2L11/BIM. Interacts with BIK. Interacts with UBQLN4. Interacts with NME2/NM23-H2. Interacts with PMAIP1/NOXA. Interacts with TPX2. Interacts with UBQLN1; in the cytoplasm. Interacts (via BH1 domain) with BECN1. Ca(2+) serves as cofactor. In terms of processing, monoubiquitinated by UBQLN1; results in stabilization of BCL2L10 protein abundance and in relocalization from mitochondria to cytoplasm. As to expression, expressed in multiple embryonic tissues. Restricted to the ovary and testis in adult mice.

The protein localises to the mitochondrion. Its subcellular location is the nucleus membrane. The protein resides in the endoplasmic reticulum. It localises to the cytoplasm. It is found in the cytoskeleton. The protein localises to the spindle. Functionally, promotes cell survival by suppressing apoptosis induced by BAX but not BAK. Increases binding of AHCYL1/IRBIT to ITPR1. Reduces ITPR1-mediated calcium release from the endoplasmic reticulum cooperatively with AHCYL1/IRBIT under normal cellular conditions. Under apoptotic stress conditions, dissociates from ITPR1 and is displaced from mitochondria-associated endoplasmic reticulum membranes, leading to increased Ca(2+) transfer to mitochondria which promotes apoptosis. Required for the correct formation of the microtubule organizing center during oocyte cell division, potentially via regulation of protein abundance and localization of other microtubule organizing center components such as AURKA and TPX2. The protein is Bcl-2-like protein 10 of Mus musculus (Mouse).